The sequence spans 241 residues: Small ribosomal subunit protein uS2 (241 aa).

This sequence belongs to the universal ribosomal protein uS2 family.

The polypeptide is Small ribosomal subunit protein uS2 (Yersinia enterocolitica serotype O:8 / biotype 1B (strain NCTC 13174 / 8081)).